Consider the following 156-residue polypeptide: Insulin (156 aa).

A signal peptide spans 1 to 31 (MSKFLLQSHSANACLLTLLLTLASNLDISLA). Cystine bridges form between Cys37-Cys114, Cys49-Cys119, Cys61-Cys128, and Cys112-Cys115. A propeptide spans 79-93 (DTENVNDKLRGILLN) (c peptide beta). Positions 96–102 (EAFSYLT) are cleaved as a propeptide — c peptide alpha. Positions 141-156 (TGRSNSGHAQLEDNFS) are cleaved as a propeptide — d peptide. The propeptide at 144-156 (SNSGHAQLEDNFS) is d peptide short form. Glu152 is subject to 4-carboxyglutamate.

This sequence belongs to the insulin family. Heterodimer of a B chain or a B chain' and an A chain probably linked by three disulfide bonds. As to expression, expressed in the central region of the cerebral ganglia mostly within the F and C clusters.

The protein localises to the secreted. In terms of biological role, involved in glucose metabolism. The protein is Insulin (PIN) of Aplysia californica (California sea hare).